A 199-amino-acid chain; its full sequence is FMN-dependent NADH:quinone oxidoreductase (199 aa).

FMN is bound by residues Ser9 and 95-98 (MYNF).

The protein belongs to the azoreductase type 1 family. In terms of assembly, homodimer. It depends on FMN as a cofactor.

The catalysed reaction is 2 a quinone + NADH + H(+) = 2 a 1,4-benzosemiquinone + NAD(+). It carries out the reaction N,N-dimethyl-1,4-phenylenediamine + anthranilate + 2 NAD(+) = 2-(4-dimethylaminophenyl)diazenylbenzoate + 2 NADH + 2 H(+). Functionally, quinone reductase that provides resistance to thiol-specific stress caused by electrophilic quinones. Also exhibits azoreductase activity. Catalyzes the reductive cleavage of the azo bond in aromatic azo compounds to the corresponding amines. In Dechloromonas aromatica (strain RCB), this protein is FMN-dependent NADH:quinone oxidoreductase.